Consider the following 451-residue polypeptide: PTS system galactose-specific EIIC component (451 aa).

The PTS EIIC type-3 domain occupies 8–427; sequence LNKTLMPLAS…VLNVLIYYPF (420 aa). 11 helical membrane passes run 40-60, 69-89, 104-124, 151-171, 190-210, 239-259, 263-283, 296-316, 332-352, 356-376, and 403-423; these read LGIA…VDFL, FSAV…YNFA, GLLS…VPVV, TGST…LVYI, VVDS…MFGI, ANPW…FFGI, LIGG…IDAY, IVFA…GLVI, LGAI…LPMM, LFFI…LGLA, and ISGG…NVLI.

Its subcellular location is the cell membrane. The phosphoenolpyruvate-dependent sugar phosphotransferase system (PTS), a major carbohydrate active transport system, catalyzes the phosphorylation of incoming sugar substrates concomitant with their translocation across the cell membrane. Involved in galactose transport with PtcA and PtcB. The protein is PTS system galactose-specific EIIC component of Lactococcus lactis subsp. cremoris (strain MG1363).